A 406-amino-acid polypeptide reads, in one-letter code: Zinc finger protein 793 (406 aa).

The region spanning 8 to 79 (VSFKDVVVGF…EAACPGCHCW (72 aa)) is the KRAB domain. C2H2-type zinc fingers lie at residues 227–249 (HVCS…QRSH), 255–277 (YGCT…QRIH), 283–305 (FECF…QRTH), 311–333 (FVCS…RKMH), 339–361 (YRCR…WRTH), and 367–389 (YGCN…QKIH).

The protein belongs to the krueppel C2H2-type zinc-finger protein family.

The protein resides in the nucleus. In terms of biological role, may be involved in transcriptional regulation. The chain is Zinc finger protein 793 (ZNF793) from Homo sapiens (Human).